We begin with the raw amino-acid sequence, 468 residues long: Argininosuccinate lyase (468 aa).

Ser33, Asn121, and Thr166 together coordinate 2-(N(omega)-L-arginino)succinate. His167 serves as the catalytic Proton acceptor. Ser288 serves as the catalytic Proton donor. 4 residues coordinate 2-(N(omega)-L-arginino)succinate: Asn296, Tyr328, Gln333, and Lys336.

The protein belongs to the lyase 1 family. Argininosuccinate lyase subfamily. Homotetramer.

It carries out the reaction 2-(N(omega)-L-arginino)succinate = fumarate + L-arginine. The protein operates within amino-acid biosynthesis; L-arginine biosynthesis; L-arginine from L-ornithine and carbamoyl phosphate: step 3/3. The chain is Argininosuccinate lyase (ARG4) from Candida albicans (Yeast).